The chain runs to 431 residues: Enolase (431 aa).

Position 167 (Gln167) interacts with (2R)-2-phosphoglycerate. Glu209 functions as the Proton donor in the catalytic mechanism. Mg(2+)-binding residues include Asp246, Glu289, and Asp316. (2R)-2-phosphoglycerate contacts are provided by Lys341, Arg370, Ser371, and Lys392. Catalysis depends on Lys341, which acts as the Proton acceptor.

It belongs to the enolase family. As to quaternary structure, component of the RNA degradosome, a multiprotein complex involved in RNA processing and mRNA degradation. Mg(2+) serves as cofactor.

The protein localises to the cytoplasm. It localises to the secreted. Its subcellular location is the cell surface. The catalysed reaction is (2R)-2-phosphoglycerate = phosphoenolpyruvate + H2O. It functions in the pathway carbohydrate degradation; glycolysis; pyruvate from D-glyceraldehyde 3-phosphate: step 4/5. Functionally, catalyzes the reversible conversion of 2-phosphoglycerate (2-PG) into phosphoenolpyruvate (PEP). It is essential for the degradation of carbohydrates via glycolysis. This chain is Enolase, found in Shewanella woodyi (strain ATCC 51908 / MS32).